A 411-amino-acid chain; its full sequence is Carbamoyl phosphate synthase arginine-specific small chain (411 aa).

Residues Ser-50, Gly-232, and Gly-234 each coordinate L-glutamine. Positions 185–376 constitute a Glutamine amidotransferase type-1 domain; that stretch reads NVALIDCGVK…FDNIEKYQLQ (192 aa). Cys-264 (nucleophile) is an active-site residue. Residues Leu-265, Gln-268, Asn-306, Gly-308, and Tyr-309 each contribute to the L-glutamine site. Catalysis depends on residues His-349 and Glu-351.

It belongs to the CarA family. In terms of assembly, heterodimer composed of 2 chains; the small (or glutamine) chain promotes the hydrolysis of glutamine to ammonia, which is used by the large (or ammonia) chain to synthesize carbamoyl phosphate.

Its subcellular location is the cytoplasm. It carries out the reaction hydrogencarbonate + L-glutamine + 2 ATP + H2O = carbamoyl phosphate + L-glutamate + 2 ADP + phosphate + 2 H(+). It catalyses the reaction L-glutamine + H2O = L-glutamate + NH4(+). It functions in the pathway amino-acid biosynthesis; L-arginine biosynthesis; carbamoyl phosphate from bicarbonate: step 1/1. In terms of biological role, small subunit of the arginine-specific carbamoyl phosphate synthase (CPSase). CPSase catalyzes the formation of carbamoyl phosphate from the ammonia moiety of glutamine, carbonate, and phosphate donated by ATP, constituting the first step of 2 biosynthetic pathways, one leading to arginine and/or urea and the other to pyrimidine nucleotides. The small subunit (glutamine amidotransferase) binds and cleaves glutamine to supply the large subunit with the substrate ammonia. The sequence is that of Carbamoyl phosphate synthase arginine-specific small chain (CPA1) from Saccharomyces cerevisiae (strain ATCC 204508 / S288c) (Baker's yeast).